A 613-amino-acid polypeptide reads, in one-letter code: Dihydroxy-acid dehydratase (613 aa).

Asp-81 lines the Mg(2+) pocket. A [2Fe-2S] cluster-binding site is contributed by Cys-122. Positions 123 and 124 each coordinate Mg(2+). Lys-124 is modified (N6-carboxylysine). Cys-195 lines the [2Fe-2S] cluster pocket. Position 491 (Glu-491) interacts with Mg(2+). Residue Ser-517 is the Proton acceptor of the active site.

It belongs to the IlvD/Edd family. Homodimer. It depends on [2Fe-2S] cluster as a cofactor. Requires Mg(2+) as cofactor.

It carries out the reaction (2R)-2,3-dihydroxy-3-methylbutanoate = 3-methyl-2-oxobutanoate + H2O. The enzyme catalyses (2R,3R)-2,3-dihydroxy-3-methylpentanoate = (S)-3-methyl-2-oxopentanoate + H2O. It participates in amino-acid biosynthesis; L-isoleucine biosynthesis; L-isoleucine from 2-oxobutanoate: step 3/4. It functions in the pathway amino-acid biosynthesis; L-valine biosynthesis; L-valine from pyruvate: step 3/4. In terms of biological role, functions in the biosynthesis of branched-chain amino acids. Catalyzes the dehydration of (2R,3R)-2,3-dihydroxy-3-methylpentanoate (2,3-dihydroxy-3-methylvalerate) into 2-oxo-3-methylpentanoate (2-oxo-3-methylvalerate) and of (2R)-2,3-dihydroxy-3-methylbutanoate (2,3-dihydroxyisovalerate) into 2-oxo-3-methylbutanoate (2-oxoisovalerate), the penultimate precursor to L-isoleucine and L-valine, respectively. This Vibrio vulnificus (strain YJ016) protein is Dihydroxy-acid dehydratase.